The following is a 152-amino-acid chain: 3-hydroxyacyl-[acyl-carrier-protein] dehydratase FabZ (152 aa).

Residue His-58 is part of the active site.

Belongs to the thioester dehydratase family. FabZ subfamily.

Its subcellular location is the cytoplasm. It carries out the reaction a (3R)-hydroxyacyl-[ACP] = a (2E)-enoyl-[ACP] + H2O. Involved in unsaturated fatty acids biosynthesis. Catalyzes the dehydration of short chain beta-hydroxyacyl-ACPs and long chain saturated and unsaturated beta-hydroxyacyl-ACPs. The polypeptide is 3-hydroxyacyl-[acyl-carrier-protein] dehydratase FabZ (Prochlorococcus marinus (strain AS9601)).